Reading from the N-terminus, the 266-residue chain is Gap junction beta-4 protein (266 aa).

Residues 2–13 (NWAFLQGLLSGV) lie within the membrane without spanning it. Over 14–20 (NKYSTVL) the chain is Cytoplasmic. A helical transmembrane segment spans residues 21–40 (SRIWLSVVFIFRVLVYVVAA). Topologically, residues 41–73 (EEVWDDEQKDFVCNTKQPGCPNVCYDEFFPVSH) are extracellular. Intrachain disulfides connect Cys-53-Cys-175, Cys-60-Cys-169, and Cys-64-Cys-164. Residues 74-94 (VRLWALQLILVTCPSLLVVMH) traverse the membrane as a helical segment. Topologically, residues 95 to 130 (VAYREERERKHHLKHGPNAPSLYDNLSKKRGGLWWT) are cytoplasmic. The helical transmembrane segment at 131 to 151 (YLLSLIFKAAVDAGFLYIFHR) threads the bilayer. Residues 152 to 184 (LYKDYDMPRVVACSVEPCPHTVDCYISRPTEKK) lie on the Extracellular side of the membrane. The helical transmembrane segment at 185-205 (VFTYFMVTTAAICILLNLSEV) threads the bilayer. Residues 206-266 (FYLVGKRCME…SAPVDAGGYP (61 aa)) lie on the Cytoplasmic side of the membrane.

This sequence belongs to the connexin family. Beta-type (group I) subfamily. As to quaternary structure, a hemichannel or connexon is composed of a hexamer of connexins. A functional gap junction is formed by the apposition of two hemichannels. Forms heteromeric channels with GJB2.

It localises to the cell membrane. Its subcellular location is the cell junction. It is found in the gap junction. Structural component of gap junctions. Gap junctions are dodecameric channels that connect the cytoplasm of adjoining cells. They are formed by the docking of two hexameric hemichannels, one from each cell membrane. Small molecules and ions diffuse from one cell to a neighboring cell via the central pore. The chain is Gap junction beta-4 protein (GJB4) from Homo sapiens (Human).